A 396-amino-acid chain; its full sequence is Ribosomal RNA large subunit methyltransferase I (396 aa).

Positions 2 to 81 constitute a PUA domain; sequence SVRLVLAKGR…ESIDIAFFTR (80 aa).

The protein belongs to the methyltransferase superfamily. RlmI family.

The protein localises to the cytoplasm. It carries out the reaction cytidine(1962) in 23S rRNA + S-adenosyl-L-methionine = 5-methylcytidine(1962) in 23S rRNA + S-adenosyl-L-homocysteine + H(+). Specifically methylates the cytosine at position 1962 (m5C1962) of 23S rRNA. In Escherichia coli O127:H6 (strain E2348/69 / EPEC), this protein is Ribosomal RNA large subunit methyltransferase I.